We begin with the raw amino-acid sequence, 107 residues long: Thioredoxin (107 aa).

Residues 2 to 107 form the Thioredoxin domain; that stretch reads VVHIENLNAF…TLKQKINDHK (106 aa). Residues Cys-32 and Cys-35 each act as nucleophile in the active site. Cys-32 and Cys-35 are joined by a disulfide. Cys-71 and Cys-75 each carry S-nitrosocysteine.

Belongs to the thioredoxin family. Post-translationally, may be nitrosylated on several cysteine residues, depending on the oxidation state. Nitrosylated Cys-75 may serve as donor for nitrosylation of target proteins.

It localises to the nucleus. The protein resides in the cytoplasm. Its subcellular location is the secreted. Its function is as follows. Participates in various redox reactions through the reversible oxidation of its active center dithiol to a disulfide and catalyzes dithiol-disulfide exchange reactions. Plays a role in the reversible S-nitrosylation of cysteine residues in target proteins, and thereby contributes to the response to intracellular nitric oxide. Nitrosylates the active site Cys of CASP3 in response to nitric oxide (NO), and thereby inhibits caspase-3 activity. Induces the FOS/JUN AP-1 DNA binding activity in ionizing radiation (IR) cells through its oxidation/reduction status and stimulates AP-1 transcriptional activity. In Ictalurus punctatus (Channel catfish), this protein is Thioredoxin (txn).